The following is a 330-amino-acid chain: Copper-containing nitrite reductase (330 aa).

Plastocyanin-like domains are found at residues glycine 1–valine 165 and tyrosine 166–alanine 330. Cu cation-binding residues include histidine 85, histidine 90, histidine 125, cysteine 126, histidine 135, methionine 140, and histidine 296.

Belongs to the multicopper oxidase family. In terms of assembly, homotrimer. Cu(2+) serves as cofactor. Requires Cu(+) as cofactor. The cofactor is FAD.

The protein localises to the periplasm. It catalyses the reaction nitric oxide + Fe(III)-[cytochrome c] + H2O = Fe(II)-[cytochrome c] + nitrite + 2 H(+). Its pathway is nitrogen metabolism; nitrate reduction (denitrification); dinitrogen from nitrate: step 2/4. In Alcaligenes xylosoxydans xylosoxydans (Achromobacter xylosoxidans), this protein is Copper-containing nitrite reductase (nirK).